A 143-amino-acid chain; its full sequence is Methylglyoxal synthase (143 aa).

The region spanning 1–143 is the MGS-like domain; sequence MTVKKIALVA…DYEAYRNRII (143 aa). Residues histidine 11, lysine 15, 37–40, and 57–58 each bind substrate; these read TGST and SG. Catalysis depends on aspartate 63, which acts as the Proton donor/acceptor. Histidine 90 lines the substrate pocket.

The protein belongs to the methylglyoxal synthase family.

It carries out the reaction dihydroxyacetone phosphate = methylglyoxal + phosphate. Its function is as follows. Catalyzes the formation of methylglyoxal from dihydroxyacetone phosphate. This is Methylglyoxal synthase from Coxiella burnetii (strain Dugway 5J108-111).